A 312-amino-acid chain; its full sequence is Ribonuclease Z (312 aa).

Residues His62, His64, Asp66, His67, His144, Asp215, and His273 each contribute to the Zn(2+) site. Asp66 acts as the Proton acceptor in catalysis.

It belongs to the RNase Z family. Homodimer. Zn(2+) is required as a cofactor.

It carries out the reaction Endonucleolytic cleavage of RNA, removing extra 3' nucleotides from tRNA precursor, generating 3' termini of tRNAs. A 3'-hydroxy group is left at the tRNA terminus and a 5'-phosphoryl group is left at the trailer molecule.. Its function is as follows. Zinc phosphodiesterase, which displays some tRNA 3'-processing endonuclease activity. Probably involved in tRNA maturation, by removing a 3'-trailer from precursor tRNA. The protein is Ribonuclease Z of Prochlorococcus marinus (strain MIT 9215).